The following is a 170-amino-acid chain: Odorant-binding protein 2b (170 aa).

The first 15 residues, 1 to 15 (MKTLFLGVTLGLAAA), serve as a signal peptide directing secretion. Cys-74 and Cys-166 are joined by a disulfide.

This sequence belongs to the calycin superfamily. Lipocalin family. As to expression, strongly expressed in genital sphere organs such as the prostate and mammary glands.

The protein localises to the secreted. Probably binds and transports small hydrophobic volatile molecules. In Homo sapiens (Human), this protein is Odorant-binding protein 2b (OBP2B).